The sequence spans 80 residues: Photosystem II extrinsic protein V (80 aa).

Residue M47 coordinates heme.

It belongs to the cytochrome c family. PsbV subfamily. As to quaternary structure, PSII is composed of 1 copy each of membrane proteins PsbA, PsbB, PsbC, PsbD, PsbE, PsbF, PsbH, PsbI, PsbJ, PsbK, PsbL, PsbM, PsbT, PsbY, PsbZ, Psb30/Ycf12, at least 3 peripheral proteins of the oxygen-evolving complex and a large number of cofactors. It forms dimeric complexes. Heme is required as a cofactor.

It localises to the plastid. The protein resides in the chloroplast thylakoid membrane. One of the extrinsic, lumenal subunits of photosystem II (PSII). PSII is a light-driven water plastoquinone oxidoreductase, using light energy to abstract electrons from H(2)O, generating a proton gradient subsequently used for ATP formation. The extrinsic proteins stabilize the structure of photosystem II oxygen-evolving complex (OEC), the ion environment of oxygen evolution and protect the OEC against heat-induced inactivation. This Thalassiosira weissflogii (Marine diatom) protein is Photosystem II extrinsic protein V.